The chain runs to 562 residues: Cell division protein FtsZ (562 aa).

GTP-binding positions include 23 to 27 (GAGGN), 110 to 112 (GTG), Glu141, Arg145, and Asp189. A compositionally biased stretch (low complexity) spans 404 to 413 (PAAARPAQQP). 2 disordered regions span residues 404-428 (PAAA…RLDP) and 462-562 (ETAQ…RQAN). A compositionally biased stretch (basic and acidic residues) spans 418-428 (FRPDPQLRLDP). 2 stretches are compositionally biased toward low complexity: residues 464–486 (AQAA…QPQR) and 500–510 (GLLRRPAAAQP).

The protein belongs to the FtsZ family. Homodimer. Polymerizes to form a dynamic ring structure in a strictly GTP-dependent manner. Interacts directly with several other division proteins. Interacts with FtsZ-like protein (also called FtsZm).

The protein resides in the cytoplasm. Its function is as follows. Essential cell division protein that forms a contractile ring structure (Z ring) at the future cell division site. The regulation of the ring assembly controls the timing and the location of cell division. One of the functions of the FtsZ ring is to recruit other cell division proteins to the septum to produce a new cell wall between the dividing cells. Binds GTP and shows GTPase activity. Mild overexpression impairs cell division, leading to very elongated cells. Isolated protein forms filaments and bundles in the presence of GTP. The protein is Cell division protein FtsZ of Magnetospirillum gryphiswaldense (strain DSM 6361 / JCM 21280 / NBRC 15271 / MSR-1).